The following is a 247-amino-acid chain: Probable phosphatase Shew_1420 (247 aa).

Positions 8, 10, 16, 41, 74, 102, 132, 193, and 195 each coordinate Zn(2+).

It belongs to the PHP family. Zn(2+) is required as a cofactor.

This chain is Probable phosphatase Shew_1420, found in Shewanella loihica (strain ATCC BAA-1088 / PV-4).